The sequence spans 339 residues: Phosphate acyltransferase (339 aa).

The protein belongs to the PlsX family. Homodimer. Probably interacts with PlsY.

It localises to the cytoplasm. It catalyses the reaction a fatty acyl-[ACP] + phosphate = an acyl phosphate + holo-[ACP]. It functions in the pathway lipid metabolism; phospholipid metabolism. Functionally, catalyzes the reversible formation of acyl-phosphate (acyl-PO(4)) from acyl-[acyl-carrier-protein] (acyl-ACP). This enzyme utilizes acyl-ACP as fatty acyl donor, but not acyl-CoA. This chain is Phosphate acyltransferase, found in Ruthia magnifica subsp. Calyptogena magnifica.